A 670-amino-acid chain; its full sequence is DUF724 domain-containing protein 1 (670 aa).

2 disordered regions span residues His283–Pro315 and Ala368–Asp445. 3 stretches are compositionally biased toward polar residues: residues Ser294–Gly309, Arg379–Met392, and Cys426–Asn442. Residues Pro484 to Pro669 form the DUF724 domain.

Expressed in stems and flowers.

Its subcellular location is the nucleus. May be involved in the polar growth of plant cells via transportation of RNAs. The protein is DUF724 domain-containing protein 1 of Arabidopsis thaliana (Mouse-ear cress).